The chain runs to 429 residues: Adenylosuccinate synthetase (429 aa).

GTP is bound by residues 12-18 and 40-42; these read GDEGKGK and GHT. The active-site Proton acceptor is the Asp-13. Residues Asp-13 and Gly-40 each contribute to the Mg(2+) site. IMP is bound by residues 13 to 16, 38 to 41, Thr-129, Arg-143, Gln-223, Thr-238, and Arg-302; these read DEGK and NAGH. The active-site Proton donor is His-41. 298–304 provides a ligand contact to substrate; that stretch reads TVTGRKR. Residues Arg-304, 330–332, and 412–414 contribute to the GTP site; these read KLD and STS.

This sequence belongs to the adenylosuccinate synthetase family. In terms of assembly, homodimer. Mg(2+) serves as cofactor.

Its subcellular location is the cytoplasm. It carries out the reaction IMP + L-aspartate + GTP = N(6)-(1,2-dicarboxyethyl)-AMP + GDP + phosphate + 2 H(+). It participates in purine metabolism; AMP biosynthesis via de novo pathway; AMP from IMP: step 1/2. In terms of biological role, plays an important role in the de novo pathway of purine nucleotide biosynthesis. Catalyzes the first committed step in the biosynthesis of AMP from IMP. The chain is Adenylosuccinate synthetase from Novosphingobium aromaticivorans (strain ATCC 700278 / DSM 12444 / CCUG 56034 / CIP 105152 / NBRC 16084 / F199).